Here is a 209-residue protein sequence, read N- to C-terminus: Mitochondrial import inner membrane translocase subunit Tim23 (209 aa).

3 helical membrane-spanning segments follow: residues 73–93 (FELA…FGAM), 125–145 (ALWA…GVII), and 172–194 (GGLR…YALY).

This sequence belongs to the Tim17/Tim22/Tim23 family. Component of the TIM23 complex at least composed of TIMM23, TIMM17 (TIMM17A or TIMM17B) and TIMM50; within this complex, directly interacts with TIMM50. The complex interacts with the TIMM44 component of the PAM complex and with DNAJC15. Upon mitochondrial depolarization, interacts with PINK1; the interaction is required for PINK1 accumulation at the outer mitochondrial membrane, kinase activation by autophosphorylation and PRKN recruitement to mitochondria.

The protein resides in the mitochondrion inner membrane. Its function is as follows. Essential component of the TIM23 complex, a complex that mediates the translocation of transit peptide-containing proteins across the mitochondrial inner membrane. Has a role in the activation of stress-induced mitophagy by protecting PINK1 from OMA1-mediated degradation and facilitating its accumulation at the outer mitochondrial membrane in response to depolarization. The chain is Mitochondrial import inner membrane translocase subunit Tim23 (TIMM23) from Bos taurus (Bovine).